The following is a 256-amino-acid chain: 2,3,4,5-tetrahydropyridine-2,6-dicarboxylate N-acetyltransferase (256 aa).

This sequence belongs to the transferase hexapeptide repeat family. DapH subfamily.

The enzyme catalyses (S)-2,3,4,5-tetrahydrodipicolinate + acetyl-CoA + H2O = L-2-acetamido-6-oxoheptanedioate + CoA. The protein operates within amino-acid biosynthesis; L-lysine biosynthesis via DAP pathway; LL-2,6-diaminopimelate from (S)-tetrahydrodipicolinate (acetylase route): step 1/3. Catalyzes the transfer of an acetyl group from acetyl-CoA to tetrahydrodipicolinate. The sequence is that of 2,3,4,5-tetrahydropyridine-2,6-dicarboxylate N-acetyltransferase from Lactococcus lactis subsp. cremoris (strain MG1363).